Here is a 657-residue protein sequence, read N- to C-terminus: Sodium/glucose cotransporter 4 (657 aa).

Residues 1–24 (MPASPEPVTATPEPEEVPAKFTLE) are Extracellular-facing. Residues 25-45 (AADIAVVVVYFVFVLAVGIWS) traverse the membrane as a helical segment. Over 46 to 79 (SIRANRGTVGGYFLAGRSMTWWPIGASLMSSNVG) the chain is Cytoplasmic. Residues 80 to 100 (SGLFIGLAGTGAAGGLAVGGF) traverse the membrane as a helical segment. Residues 101-104 (EWNA) are Extracellular-facing. The chain crosses the membrane as a helical span at residues 105-125 (AWVLIALGWIFVPVYISAGVV). The Cytoplasmic portion of the chain corresponds to 126–147 (TMPEYLRKRFGGQRIRIYMSVL). The chain crosses the membrane as a helical span at residues 148 to 168 (SLILYILTKISTDIFSGALFI). Topologically, residues 169–180 (QVSLGWDLYLST) are extracellular. Residues 181–201 (VILLAVTALYTIAGGLTAVIY) form a helical membrane-spanning segment. Over 202 to 207 (TDALQT) the chain is Cytoplasmic. A helical transmembrane segment spans residues 208–228 (VIMVIGAFVLMFIAFDKVGWY). At 229-265 (EGLLVQYEKAAPALTVPNTTCHLPRSDAFHIFRDPVT) the chain is on the extracellular side. Residue asparagine 246 is glycosylated (N-linked (GlcNAc...) asparagine). A helical membrane pass occupies residues 266-286 (GDIPWPGLIFGLTVLATWVWC). Residues 287-307 (TDQVIVQRSLSAKNLSHAKAG) lie on the Cytoplasmic side of the membrane. Residues 308–328 (SVLGGYLKVFPMFFVVMPGMI) traverse the membrane as a helical segment. The Extracellular segment spans residues 329 to 373 (SRALYPDEVACVDPDECQKICGAKVGCSNIAYPKLVVELMPVGMR). Residues 374-396 (GLMIAVMMAALMSSLTSIFNSSS) form a helical membrane-spanning segment. Topologically, residues 397–417 (TLFTMDIWQRIRPRASEKELM) are cytoplasmic. Residues 418 to 438 (VVGRVFILLLVALSIVWIPVI) form a helical membrane-spanning segment. At 439-451 (QTANSGQLFDYIQ) the chain is on the extracellular side. A helical transmembrane segment spans residues 452-472 (AITSFLSPPITTVFIMAIFWG). Residues 473–478 (RVNEQG) lie on the Cytoplasmic side of the membrane. A helical transmembrane segment spans residues 479-499 (AFWGLMVGLVVGMVRMIMEFV). Over 500-520 (YGTPSCGETDLRPSLLKDVHY) the chain is Extracellular. Residues 521 to 541 (LYFALILLALTVLIITAVSLC) form a helical membrane-spanning segment. At 542–636 (TAPIPEKHLV…SIEEDHMWKT (95 aa)) the chain is on the cytoplasmic side. The chain crosses the membrane as a helical span at residues 637–657 (VCNVNALILLTANVFLWGYFA).

This sequence belongs to the sodium:solute symporter (SSF) (TC 2.A.21) family.

The protein resides in the membrane. Probable sodium-dependent sugar transporter. The polypeptide is Sodium/glucose cotransporter 4 (slc5a9) (Danio rerio (Zebrafish)).